Consider the following 352-residue polypeptide: Photosystem II D2 protein (352 aa).

A helical membrane pass occupies residues 40-60 (TAYLALGGWLTGTTFVTSWYT). Residue histidine 117 coordinates chlorophyll a. Residues 124–140 (GFMLRQFEIARLVGIRP) form a helical membrane-spanning segment. Pheophytin a-binding residues include glutamine 129 and asparagine 142. The helical transmembrane segment at 152 to 165 (VFVSVFLIYPLGQS) threads the bilayer. Chlorophyll a is bound at residue histidine 197. Residues 207 to 227 (GALLCAIHGATVENTLFEDGE) traverse the membrane as a helical segment. The a plastoquinone site is built by histidine 214 and phenylalanine 261. Fe cation is bound at residue histidine 214. Histidine 268 lines the Fe cation pocket. Residues 278–294 (GLWTSSIGIIGLALNLR) form a helical membrane-spanning segment.

It belongs to the reaction center PufL/M/PsbA/D family. In terms of assembly, PSII is composed of 1 copy each of membrane proteins PsbA, PsbB, PsbC, PsbD, PsbE, PsbF, PsbH, PsbI, PsbJ, PsbK, PsbL, PsbM, PsbT, PsbX, PsbY, PsbZ, Psb30/Ycf12, at least 3 peripheral proteins of the oxygen-evolving complex and a large number of cofactors. It forms dimeric complexes. It depends on The D1/D2 heterodimer binds P680, chlorophylls that are the primary electron donor of PSII, and subsequent electron acceptors. It shares a non-heme iron and each subunit binds pheophytin, quinone, additional chlorophylls, carotenoids and lipids. There is also a Cl(-1) ion associated with D1 and D2, which is required for oxygen evolution. The PSII complex binds additional chlorophylls, carotenoids and specific lipids. as a cofactor.

The protein resides in the plastid. It localises to the organellar chromatophore thylakoid membrane. It carries out the reaction 2 a plastoquinone + 4 hnu + 2 H2O = 2 a plastoquinol + O2. Functionally, photosystem II (PSII) is a light-driven water:plastoquinone oxidoreductase that uses light energy to abstract electrons from H(2)O, generating O(2) and a proton gradient subsequently used for ATP formation. It consists of a core antenna complex that captures photons, and an electron transfer chain that converts photonic excitation into a charge separation. The D1/D2 (PsbA/PsbD) reaction center heterodimer binds P680, the primary electron donor of PSII as well as several subsequent electron acceptors. D2 is needed for assembly of a stable PSII complex. This chain is Photosystem II D2 protein, found in Paulinella chromatophora.